We begin with the raw amino-acid sequence, 176 residues long: Protein GrpE (176 aa).

The segment at 1-28 (MSEQKQEFENENAENSEHLQDENLQNIE) is disordered.

Belongs to the GrpE family. In terms of assembly, homodimer.

It is found in the cytoplasm. Its function is as follows. Participates actively in the response to hyperosmotic and heat shock by preventing the aggregation of stress-denatured proteins, in association with DnaK and GrpE. It is the nucleotide exchange factor for DnaK and may function as a thermosensor. Unfolded proteins bind initially to DnaJ; upon interaction with the DnaJ-bound protein, DnaK hydrolyzes its bound ATP, resulting in the formation of a stable complex. GrpE releases ADP from DnaK; ATP binding to DnaK triggers the release of the substrate protein, thus completing the reaction cycle. Several rounds of ATP-dependent interactions between DnaJ, DnaK and GrpE are required for fully efficient folding. The protein is Protein GrpE of Campylobacter jejuni subsp. jejuni serotype O:2 (strain ATCC 700819 / NCTC 11168).